Reading from the N-terminus, the 101-residue chain is Small ribosomal subunit protein uS14 (101 aa).

Residues 1–10 (MAKKSSIEKN) are compositionally biased toward basic and acidic residues. The disordered stretch occupies residues 1–23 (MAKKSSIEKNNRRKKMTKNAAPK). The span at 11 to 23 (NRRKKMTKNAAPK) shows a compositional bias: basic residues.

Belongs to the universal ribosomal protein uS14 family. In terms of assembly, part of the 30S ribosomal subunit. Contacts proteins S3 and S10.

Functionally, binds 16S rRNA, required for the assembly of 30S particles and may also be responsible for determining the conformation of the 16S rRNA at the A site. The chain is Small ribosomal subunit protein uS14 from Rhodopseudomonas palustris (strain HaA2).